Consider the following 556-residue polypeptide: Cytochrome P450 monooxygenase polC (556 aa).

Residues 17-37 (LCFAISLLCAVAIATFLHKLY) form a helical membrane-spanning segment. Residue Cys-479 coordinates heme.

Belongs to the cytochrome P450 family. The cofactor is heme.

It localises to the membrane. The catalysed reaction is motiol + 3 reduced [NADPH--hemoprotein reductase] + 3 O2 = 4beta-carboxyl motiol + 3 oxidized [NADPH--hemoprotein reductase] + 4 H2O + 4 H(+). Its pathway is secondary metabolite biosynthesis; terpenoid biosynthesis. Cytochrome P450 monooxygenase; part of the gene cluster that mediates the biosynthesis of antifungal fernane-type triterpenoid polytolypin. PolC uses motiol as a substrate and converts the methyl group at position C-4 to a carboxyl group. Within the pathway, the triterpene cyclase polA first catalyzes the cyclization of 2,3-oxidosqualene to motiol, polC converts the 4-alpha-methyl group of motiol to a carboxyl group, polB is responsible for appending a hydroxyl group at the 2-alpha position and polE is a dual functional P450, which can catalyze the formation of both the 1-beta-hydroxyl group and 10-beta-carboxyl group. This is Cytochrome P450 monooxygenase polC from Polytolypa hystricis (strain UAMH7299).